Reading from the N-terminus, the 148-residue chain is Large ribosomal subunit protein bL19 (148 aa).

The protein belongs to the bacterial ribosomal protein bL19 family.

In terms of biological role, this protein is located at the 30S-50S ribosomal subunit interface and may play a role in the structure and function of the aminoacyl-tRNA binding site. This is Large ribosomal subunit protein bL19 from Beijerinckia indica subsp. indica (strain ATCC 9039 / DSM 1715 / NCIMB 8712).